The primary structure comprises 169 residues: GTP-dependent dephospho-CoA kinase (169 aa).

3 residues coordinate GTP: D45, D64, and E121.

This sequence belongs to the GTP-dependent DPCK family.

The enzyme catalyses 3'-dephospho-CoA + GTP = GDP + CoA + H(+). The protein operates within cofactor biosynthesis; coenzyme A biosynthesis. Its function is as follows. Catalyzes the GTP-dependent phosphorylation of the 3'-hydroxyl group of dephosphocoenzyme A to form coenzyme A (CoA). The chain is GTP-dependent dephospho-CoA kinase from Methanobrevibacter smithii (strain ATCC 35061 / DSM 861 / OCM 144 / PS).